We begin with the raw amino-acid sequence, 550 residues long: Arginine--tRNA ligase (550 aa).

The 'HIGH' region signature appears at 130–140 (ANPTGPIHIGG).

Belongs to the class-I aminoacyl-tRNA synthetase family. In terms of assembly, monomer.

The protein resides in the cytoplasm. The enzyme catalyses tRNA(Arg) + L-arginine + ATP = L-arginyl-tRNA(Arg) + AMP + diphosphate. The protein is Arginine--tRNA ligase (argS) of Mycobacterium tuberculosis (strain CDC 1551 / Oshkosh).